We begin with the raw amino-acid sequence, 370 residues long: Glutamate 5-kinase (370 aa).

Lys-13 contacts ATP. The substrate site is built by Ser-54, Asp-140, and Asn-152. ATP is bound by residues 172 to 173 (SD) and 214 to 220 (SGGMVTK). One can recognise a PUA domain in the interval 278–355 (TGTLVLDAGA…GEIEAILGFR (78 aa)).

Belongs to the glutamate 5-kinase family.

The protein resides in the cytoplasm. The catalysed reaction is L-glutamate + ATP = L-glutamyl 5-phosphate + ADP. It participates in amino-acid biosynthesis; L-proline biosynthesis; L-glutamate 5-semialdehyde from L-glutamate: step 1/2. Its function is as follows. Catalyzes the transfer of a phosphate group to glutamate to form L-glutamate 5-phosphate. The polypeptide is Glutamate 5-kinase (Paramagnetospirillum magneticum (strain ATCC 700264 / AMB-1) (Magnetospirillum magneticum)).